Here is a 146-residue protein sequence, read N- to C-terminus: Leptin (146 aa).

An intrachain disulfide couples Cys96 to Cys146.

The protein belongs to the leptin family.

It is found in the secreted. Its function is as follows. Key player in the regulation of energy balance and body weight control. Once released into the circulation, has central and peripheral effects by binding LEPR, found in many tissues, which results in the activation of several major signaling pathways. In the hypothalamus, acts as an appetite-regulating factor that induces a decrease in food intake and an increase in energy consumption by inducing anorexinogenic factors and suppressing orexigenic neuropeptides, also regulates bone mass and secretion of hypothalamo-pituitary-adrenal hormones. In the periphery, increases basal metabolism, influences reproductive function, regulates pancreatic beta-cell function and insulin secretion, is pro-angiogenic for endothelial cell and affects innate and adaptive immunity. In the arcuate nucleus of the hypothalamus, activates by depolarization POMC neurons inducing FOS and SOCS3 expression to release anorexigenic peptides and inhibits by hyperpolarization NPY neurons inducing SOCS3 with a consequent reduction on release of orexigenic peptides. In addition to its known satiety inducing effect, has a modulatory role in nutrient absorption. In the intestine, reduces glucose absorption by enterocytes by activating PKC and leading to a sequential activation of p38, PI3K and ERK signaling pathways which exerts an inhibitory effect on glucose absorption. Acts as a growth factor on certain tissues, through the activation of different signaling pathways increases expression of genes involved in cell cycle regulation such as CCND1, via JAK2-STAT3 pathway, or VEGFA, via MAPK1/3 and PI3K-AKT1 pathways. May also play an apoptotic role via JAK2-STAT3 pathway and up-regulation of BIRC5 expression. Pro-angiogenic, has mitogenic activity on vascular endothelial cells and plays a role in matrix remodeling by regulating the expression of matrix metalloproteinases (MMPs) and tissue inhibitors of metalloproteinases (TIMPs). In innate immunity, modulates the activity and function of neutrophils by increasing chemotaxis and the secretion of oxygen radicals. Increases phagocytosis by macrophages and enhances secretion of pro-inflammatory mediators. Increases cytotoxic ability of NK cells. Plays a pro-inflammatory role, in synergy with IL1B, by inducing NOS2 which promotes the production of IL6, IL8 and Prostaglandin E2, through a signaling pathway that involves JAK2, PI3K, MAP2K1/MEK1 and MAPK14/p38. In adaptive immunity, promotes the switch of memory T-cells towards T helper-1 cell immune responses. Increases CD4(+)CD25(-) T-cell proliferation and reduces autophagy during TCR (T-cell receptor) stimulation, through MTOR signaling pathway activation and BCL2 up-regulation. The polypeptide is Leptin (LEP) (Gorilla gorilla gorilla (Western lowland gorilla)).